The following is a 450-amino-acid chain: NADP-specific glutamate dehydrogenase (450 aa).

Residue Lys111 is part of the active site.

It belongs to the Glu/Leu/Phe/Val dehydrogenases family. In terms of assembly, homohexamer.

It catalyses the reaction L-glutamate + NADP(+) + H2O = 2-oxoglutarate + NH4(+) + NADPH + H(+). In Laccaria bicolor (strain S238N-H82 / ATCC MYA-4686) (Bicoloured deceiver), this protein is NADP-specific glutamate dehydrogenase (GDHA).